The sequence spans 2156 residues: Probable capsid protein 3 (2156 aa).

Residues 1319–1345 (NKSNKSNKSNESDKSSESDKSSESSNH) form a disordered region. Basic and acidic residues predominate over residues 1326 to 1345 (KSNESDKSSESDKSSESSNH).

The protein belongs to the NCLDV major capsid protein family.

It is found in the virion. The sequence is that of Probable capsid protein 3 from Acanthamoeba polyphaga mimivirus (APMV).